Reading from the N-terminus, the 467-residue chain is MKEYPSVTVIGAGLAGSEAAWQIASAGIKVTLFEMRPKKKSPAHHSSEFAELVCSNSFGALSSDRAAGLLQEELRTLKSIVINKADKHSVPAGGALAVDRSQFSLSITNELSSHPLITIIRDECPSLPKTQQITILATGPLTSELLAEDIKEFTGEKECHFFDAASPIITGESIDFSTAFRASRYDKGDADYVNCPMNEDSYIKFHSELIKAEQAKLKDFEKESAHFFEGCLPIEQLAKRGIDTMRYGPLKPIGLWDPRWGDVNDKNIRRLKRAHAVVQLRQEDKAGQLWNLVGFQTNLKWGEQKRIFRMIPGLSKAEFIRFGVMHRNTYLESPKLIEPTLQFINRKTLFAAGQLTGTEGYAAAIAGGWLAGTNAALLAKGLDTITLPSSTMIGALTNFVSNSQASLRVKNKKNFQPMPANFGLLPELDNRVHNKRERYKEYRDRALGQIKKLRETLLDKSSYPTTI.

11–16 (GAGLAG) is an FAD binding site.

Belongs to the MnmG family. TrmFO subfamily. FAD is required as a cofactor.

Its subcellular location is the cytoplasm. The catalysed reaction is uridine(54) in tRNA + (6R)-5,10-methylene-5,6,7,8-tetrahydrofolate + NADH + H(+) = 5-methyluridine(54) in tRNA + (6S)-5,6,7,8-tetrahydrofolate + NAD(+). The enzyme catalyses uridine(54) in tRNA + (6R)-5,10-methylene-5,6,7,8-tetrahydrofolate + NADPH + H(+) = 5-methyluridine(54) in tRNA + (6S)-5,6,7,8-tetrahydrofolate + NADP(+). In terms of biological role, catalyzes the folate-dependent formation of 5-methyl-uridine at position 54 (M-5-U54) in all tRNAs. This chain is Methylenetetrahydrofolate--tRNA-(uracil-5-)-methyltransferase TrmFO, found in Prochlorococcus marinus (strain NATL1A).